The sequence spans 106 residues: Vacuolar ATPase assembly integral membrane protein VMA21 homolog (106 aa).

Residues 1 to 26 (MSNKNKKSGGAGNGAAQKQTRQQSHD) are disordered. Residues 1–32 (MSNKNKKSGGAGNGAAQKQTRQQSHDSQDYSS) lie on the Cytoplasmic side of the membrane. The chain crosses the membrane as a helical span at residues 33–53 (FKIVLFYCMLIVFLPVVTFFL). The Lumenal segment spans residues 54–69 (LKGFVLDRFFSLSEVK). A helical transmembrane segment spans residues 70–90 (VNIASAVGAVVSLHIALGLYI). At 91 to 106 (YRAYFGATGSKAVKED) the chain is on the cytoplasmic side.

Belongs to the VMA21 family.

Its subcellular location is the endoplasmic reticulum membrane. The protein resides in the endoplasmic reticulum-Golgi intermediate compartment membrane. It localises to the cytoplasmic vesicle. It is found in the COPII-coated vesicle membrane. In terms of biological role, required for the assembly of the V0 complex of the vacuolar ATPase (V-ATPase) in the endoplasmic reticulum. The protein is Vacuolar ATPase assembly integral membrane protein VMA21 homolog of Drosophila ananassae (Fruit fly).